Reading from the N-terminus, the 329-residue chain is Holliday junction branch migration complex subunit RuvB (329 aa).

The tract at residues 1–181 (MNELLHQHKA…FGIPLHLEFY (181 aa)) is large ATPase domain (RuvB-L). ATP-binding residues include leucine 20, arginine 21, glycine 62, lysine 65, threonine 66, threonine 67, arginine 171, tyrosine 181, and arginine 218. Threonine 66 lines the Mg(2+) pocket. The tract at residues 182–252 (SVEELMLVIK…FADSALFNLG (71 aa)) is small ATPAse domain (RuvB-S). The segment at 255 to 329 (KSGLDKMDIK…IEHLMNYKYI (75 aa)) is head domain (RuvB-H). The DNA site is built by arginine 308 and arginine 313.

This sequence belongs to the RuvB family. Homohexamer. Forms an RuvA(8)-RuvB(12)-Holliday junction (HJ) complex. HJ DNA is sandwiched between 2 RuvA tetramers; dsDNA enters through RuvA and exits via RuvB. An RuvB hexamer assembles on each DNA strand where it exits the tetramer. Each RuvB hexamer is contacted by two RuvA subunits (via domain III) on 2 adjacent RuvB subunits; this complex drives branch migration. In the full resolvosome a probable DNA-RuvA(4)-RuvB(12)-RuvC(2) complex forms which resolves the HJ.

The protein resides in the cytoplasm. It carries out the reaction ATP + H2O = ADP + phosphate + H(+). In terms of biological role, the RuvA-RuvB-RuvC complex processes Holliday junction (HJ) DNA during genetic recombination and DNA repair, while the RuvA-RuvB complex plays an important role in the rescue of blocked DNA replication forks via replication fork reversal (RFR). RuvA specifically binds to HJ cruciform DNA, conferring on it an open structure. The RuvB hexamer acts as an ATP-dependent pump, pulling dsDNA into and through the RuvAB complex. RuvB forms 2 homohexamers on either side of HJ DNA bound by 1 or 2 RuvA tetramers; 4 subunits per hexamer contact DNA at a time. Coordinated motions by a converter formed by DNA-disengaged RuvB subunits stimulates ATP hydrolysis and nucleotide exchange. Immobilization of the converter enables RuvB to convert the ATP-contained energy into a lever motion, pulling 2 nucleotides of DNA out of the RuvA tetramer per ATP hydrolyzed, thus driving DNA branch migration. The RuvB motors rotate together with the DNA substrate, which together with the progressing nucleotide cycle form the mechanistic basis for DNA recombination by continuous HJ branch migration. Branch migration allows RuvC to scan DNA until it finds its consensus sequence, where it cleaves and resolves cruciform DNA. The chain is Holliday junction branch migration complex subunit RuvB from Anaplasma phagocytophilum (strain HZ).